A 38-amino-acid polypeptide reads, in one-letter code: Defensin (38 aa).

Disulfide bonds link cysteine 4-cysteine 26, cysteine 11-cysteine 34, and cysteine 15-cysteine 36.

The protein belongs to the invertebrate defensin family. Type 2 subfamily.

It is found in the secreted. In terms of biological role, mediates the inducible antibacterial activity in larvae of A.cyanea. In Aeshna cyanea (Southern hawker dragonfly), this protein is Defensin.